Consider the following 88-residue polypeptide: MLDTKFDELMEFPCSFPYKVVGDASETLADRVVAVVQKHVPGDYVPSSKVSSKGTYNSITIRVTVQSKEQVESLYIDLAAIEGVKRVL.

This sequence belongs to the UPF0250 family.

The chain is UPF0250 protein Swoo_3713 from Shewanella woodyi (strain ATCC 51908 / MS32).